A 154-amino-acid chain; its full sequence is OCIA domain-containing protein 2 (154 aa).

Residues 1 to 23 (MASVSTHENQEKGPHLPPPSKQS) form a disordered region. The OCIA domain occupies 1-120 (MASVSTHENQ…HSFEGQLRGA (120 aa)). Lysine 41 carries the N6-acetyllysine modification.

In terms of assembly, interacts (via OCIA domain) with OCIAD1/ASRIJ and STAT3.

The protein resides in the endosome. It localises to the mitochondrion. Its subcellular location is the mitochondrion inner membrane. Has an essential role in the assembly of mitochondrial respiratory chain complex III. Is also required for STAT3 activation and plays a role in cell migration. The protein is OCIA domain-containing protein 2 (OCIAD2) of Bos taurus (Bovine).